The chain runs to 141 residues: Hemoglobin subunit beta-C (141 aa).

The region spanning 1 to 141 (PNKALITGFW…VASALAHRYH (141 aa)) is the Globin domain. Heme b is bound by residues His58 and His87.

It belongs to the globin family. Heterotetramer of two alpha chains and two beta chains. In terms of tissue distribution, red blood cells.

Functionally, involved in oxygen transport from the lung to the various peripheral tissues. This chain is Hemoglobin subunit beta-C (HBBC), found in Ovis aries musimon (Mouflon).